A 555-amino-acid chain; its full sequence is MRSGLFGVLRWTAVGLVATLVASLALTACSGSAAGEIVYVVDGALGTYNTNTIVGAASAGAQAFARTLIGFGYHGPDGQIVADHDFGTITVVGGVPLVLDYQIADNAVYSDGKQVTCDDLVLTWAAQSGRFPGFDAATQAGYRDIANIECLAGQKKSRVFFVPDRSVVDYEQLFAATSMMPSHVIADQLNIDVTEALLTHNATLVEQIARLWNTTWDLKPAVDLRRFPSSGPYKIESVLNGGAVVLVANDRWWGLKATTKRITVRPQEADIQDRVNNRSVDVVDVAVGSSGSLATPDNYARIDSPSAGIEQLIFAPQGLLAAAAARRALALCTPRDVVARDAGLSIANSRLSPATEDAIAAADGAREAGQFSKADPAAAHDALSGETLPVRIGYQGPNARLAATVGTIAKACAVAGISVSSVTLDSSTDPSGPQALRDGKIDVLLASTGGATGSGSSGSSSMDAYDLHTGNGNNLSGYANAQVDNNIGALAVSADPAERVRLLADSAPVLWADMPTLPLYRQQRMLLMSKTMYAVTRNPTRWGAGWNMDRWALVR.

A signal peptide spans 1–28; it reads MRSGLFGVLRWTAVGLVATLVASLALTA. A lipid anchor (N-palmitoyl cysteine) is attached at Cys-29. Residue Cys-29 is the site of S-diacylglycerol cysteine attachment.

To M.tuberculosis Rv2585c and M.bovis Mb2616c.

The protein localises to the cell membrane. This is an uncharacterized protein from Mycobacterium leprae (strain TN).